Here is a 344-residue protein sequence, read N- to C-terminus: Serine proteinase inhibitor 2 (344 aa).

This sequence belongs to the serpin family. Poxviruses subfamily.

Its subcellular location is the host cytoplasm. In terms of biological role, viral serpin that inhibits both cysteine and serine proteinases involved in the regulation of host inflammatory and apoptosis processes. Major anti-apoptotic protein which inhibits both intrinsic and extrinsic pathways and strongly cleaves host CASP1 and CASP8 but is a rather poor inhibitor of host CASP3. Prevents the proteolytic activity of host interleukin-1-beta converting enzyme (ICE) and ICE-like enzymes. Can also block apoptosis through host tumor necrosis factor (TNF) receptor. The inhibition of host ICE is an example of a 'cross-class' interaction, in which a serpin inhibits a non-serine proteinase. Also inhibits granzyme B. This chain is Serine proteinase inhibitor 2 (OPG199), found in Homo sapiens (Human).